The primary structure comprises 763 residues: MAGFDWFWKALGGKSGRNQKRSVAIVNQAENHVAELDALDDVALAQRAKDLASGGRIDNHAEFLAILGVASQRTLGLKPYPAQSQAVLRLIEGDVVHMATGEGKTLVGAMAATGLGLMGKRVHSITVNDYLAVRDAEWMRPLVEFFGLSVASISEKMDAGERRQAYKAAIVYGPVNEIGFDVLRDQLITRREDAVQHGADVAIIDEADSVLVDEALVPLVLAGNQPGHAPRGKITDVVRSLKENDDYTIDDDRRNVFLTDKGAAKLEQQLGISSLYDDEHVGSTLVQVNLALHAQALLIRDIHYIVRDSKVLLIDASRGRVADLQRWPDGLQAAVEAKEGLAVSEGGKILDTITLQALIGRYPMACGMTGTAVEATNQLRTFYDLHVSVIERNHPLKRFDEADRIYATMAEKNRAIIDEIALLHSTGQPVLVGTHDVAESEELATALRELNIEVSVLNAKNDAEEAQIIAEAGDIGRVTVSTQMAGRGTDIRLGGADEADYDEVVKLGGLAVIGTARHRSQRLDNQLRGRAGRQGDPGLSLFFVSLDDDVVVSGGSGESVSAQPDATGLIDSDRIRDWVGHCQRVTEGQLLEIHSQSWNYNKLLADQRVIIDERRERLLDTALAWEELAQHAPARAAELEDLDQSVREQAGRDIMLYHLDYNWSEHLALMDDVRESIHLRAIARETPLDEYHRIAVREFKDLAQRAVDDAVSTFKSVTIDHEGAHLDDEGLARPSATWTYMVSDNPLAGSGNSVISGIGNIFR.

Residues glutamine 83, 101-105, and aspartate 490 contribute to the ATP site; that span reads GEGKT.

This sequence belongs to the SecA family. Monomer and homodimer. Part of the essential Sec protein translocation apparatus which comprises SecA, SecYEG and auxiliary proteins SecDF. Other proteins may also be involved.

It localises to the cell membrane. The protein resides in the cytoplasm. It carries out the reaction ATP + H2O + cellular proteinSide 1 = ADP + phosphate + cellular proteinSide 2.. Functionally, part of the Sec protein translocase complex. Interacts with the SecYEG preprotein conducting channel. Has a central role in coupling the hydrolysis of ATP to the transfer of proteins into and across the cell membrane, serving as an ATP-driven molecular motor driving the stepwise translocation of polypeptide chains across the membrane. In Corynebacterium glutamicum (strain R), this protein is Protein translocase subunit SecA 2.